We begin with the raw amino-acid sequence, 317 residues long: MTDKLTSLRQVTTVVADTGDIAAMKLYQPQDATTNPSLILNAAQIPEYRKLIDEAIAWAREQSSDRKQQVVDATDKLAVNIGLEILKLIPGRISTEVDARLSYDTEASVAKAKHLIKLYNDAGISNERILIKLASTWQGICAAEQLEKEGINCNLTLLFSFAQARACAEAGVFLISPFVGRILDWYKANGDKKEFAPHEDPGVVSVSEIYDYYKEHGYETVVMGASFRNVGEILELAGCDRLTIAPALLKELSESEGEVVRKLSYVGDVKVRPARMTEAEFYWQHNQDPMAIDKLADGIRKFAIDQEKLEKMIADLL.

Residue Lys132 is the Schiff-base intermediate with substrate of the active site.

It belongs to the transaldolase family. Type 1 subfamily. Homodimer.

It is found in the cytoplasm. It catalyses the reaction D-sedoheptulose 7-phosphate + D-glyceraldehyde 3-phosphate = D-erythrose 4-phosphate + beta-D-fructose 6-phosphate. It functions in the pathway carbohydrate degradation; pentose phosphate pathway; D-glyceraldehyde 3-phosphate and beta-D-fructose 6-phosphate from D-ribose 5-phosphate and D-xylulose 5-phosphate (non-oxidative stage): step 2/3. Transaldolase is important for the balance of metabolites in the pentose-phosphate pathway. The protein is Transaldolase 2 of Pectobacterium atrosepticum (strain SCRI 1043 / ATCC BAA-672) (Erwinia carotovora subsp. atroseptica).